We begin with the raw amino-acid sequence, 290 residues long: uncharacterized protein (290 aa).

A coiled-coil region spans residues 161–216 (SNQREVESLEQLVHEQLNKLNTESKMEFENRKNDTKNEVQQLSARIVELHNLLAVS). The helical transmembrane segment at 236-256 (AGVVMAFTGFLVLVIPFGLGV) threads the bilayer.

The protein resides in the mitochondrion membrane. This is an uncharacterized protein from Schizosaccharomyces pombe (strain 972 / ATCC 24843) (Fission yeast).